The following is a 474-amino-acid chain: tRNA modification GTPase MnmE (474 aa).

Residues Arg25, Glu82, and Lys123 each contribute to the (6S)-5-formyl-5,6,7,8-tetrahydrofolate site. A TrmE-type G domain is found at 219 to 386; sequence GIKVVIAGKP…LKKHLYDSAM (168 aa). Residue Asn229 coordinates K(+). GTP contacts are provided by residues 229–234, 248–254, and 273–276; these read NAGKSS, SNISGTT, and DTAG. Residue Ser233 participates in Mg(2+) binding. Residues Ser248, Ile250, and Thr253 each contribute to the K(+) site. Thr254 provides a ligand contact to Mg(2+). Lys474 is a binding site for (6S)-5-formyl-5,6,7,8-tetrahydrofolate.

It belongs to the TRAFAC class TrmE-Era-EngA-EngB-Septin-like GTPase superfamily. TrmE GTPase family. Homodimer. Heterotetramer of two MnmE and two MnmG subunits. Requires K(+) as cofactor.

It localises to the cytoplasm. Exhibits a very high intrinsic GTPase hydrolysis rate. Involved in the addition of a carboxymethylaminomethyl (cmnm) group at the wobble position (U34) of certain tRNAs, forming tRNA-cmnm(5)s(2)U34. This Blochmanniella floridana protein is tRNA modification GTPase MnmE.